The chain runs to 371 residues: uncharacterized protein (371 aa).

His-76 contacts Zn(2+). Asp-78 is a catalytic residue. Asp-106 contacts Zn(2+). The Proton acceptor role is filled by Glu-139. Residues Glu-140, Asp-163, and His-344 each contribute to the Zn(2+) site.

Belongs to the peptidase M20A family. The cofactor is Zn(2+).

Functionally, could be a peptidase. This is an uncharacterized protein from Bacillus subtilis (strain 168).